Consider the following 413-residue polypeptide: Multifunctional CCA protein (413 aa).

Positions 8 and 11 each coordinate ATP. Residues glycine 8 and arginine 11 each contribute to the CTP site. Positions 21 and 23 each coordinate Mg(2+). Residues arginine 91, arginine 143, and arginine 146 each contribute to the ATP site. Arginine 91, arginine 143, and arginine 146 together coordinate CTP. Positions 232-333 (TGVHVMMVID…VRLLERADAL (102 aa)) constitute an HD domain.

The protein belongs to the tRNA nucleotidyltransferase/poly(A) polymerase family. Bacterial CCA-adding enzyme type 1 subfamily. Monomer. Can also form homodimers and oligomers. It depends on Mg(2+) as a cofactor. The cofactor is Ni(2+).

It catalyses the reaction a tRNA precursor + 2 CTP + ATP = a tRNA with a 3' CCA end + 3 diphosphate. The catalysed reaction is a tRNA with a 3' CCA end + 2 CTP + ATP = a tRNA with a 3' CCACCA end + 3 diphosphate. In terms of biological role, catalyzes the addition and repair of the essential 3'-terminal CCA sequence in tRNAs without using a nucleic acid template. Adds these three nucleotides in the order of C, C, and A to the tRNA nucleotide-73, using CTP and ATP as substrates and producing inorganic pyrophosphate. tRNA 3'-terminal CCA addition is required both for tRNA processing and repair. Also involved in tRNA surveillance by mediating tandem CCA addition to generate a CCACCA at the 3' terminus of unstable tRNAs. While stable tRNAs receive only 3'-terminal CCA, unstable tRNAs are marked with CCACCA and rapidly degraded. The sequence is that of Multifunctional CCA protein from Burkholderia pseudomallei (strain K96243).